Reading from the N-terminus, the 256-residue chain is MRHIPRRRFGQHFLVDHHIIAEIIHIICPLPGDRMIEIGPGLGALTQPLLNNLDTLQAIELDRDIVDYLSRNYAEKLVIHNVDALKFDFSALGEGLRIVGNLPYNISTPLLFHLSRFSNLIIDMHFMLQLEVVERMVAQPSTPDYGRLSLMLQNRFEMEQMLIVPAEAFNPPPRVQSAIVCMRPRVVPVIPFGLEKLFGEMVLAAFSQRRKTLRNTLRHYLTIKDFDQLRIDPGLRAENLSLEQYSAITRHIHKIR.

His-12, Leu-14, Gly-39, Glu-60, Asp-83, and Asn-101 together coordinate S-adenosyl-L-methionine.

Belongs to the class I-like SAM-binding methyltransferase superfamily. rRNA adenine N(6)-methyltransferase family. RsmA subfamily.

The protein localises to the cytoplasm. It catalyses the reaction adenosine(1518)/adenosine(1519) in 16S rRNA + 4 S-adenosyl-L-methionine = N(6)-dimethyladenosine(1518)/N(6)-dimethyladenosine(1519) in 16S rRNA + 4 S-adenosyl-L-homocysteine + 4 H(+). In terms of biological role, specifically dimethylates two adjacent adenosines (A1518 and A1519) in the loop of a conserved hairpin near the 3'-end of 16S rRNA in the 30S particle. May play a critical role in biogenesis of 30S subunits. This is Ribosomal RNA small subunit methyltransferase A from Nitrosomonas eutropha (strain DSM 101675 / C91 / Nm57).